We begin with the raw amino-acid sequence, 119 residues long: Large ribosomal subunit protein uL22c (119 aa).

This sequence belongs to the universal ribosomal protein uL22 family. Part of the 50S ribosomal subunit.

The protein resides in the plastid. It localises to the chloroplast. This protein binds specifically to 23S rRNA. Its function is as follows. The globular domain of the protein is located near the polypeptide exit tunnel on the outside of the subunit, while an extended beta-hairpin is found that lines the wall of the exit tunnel in the center of the 70S ribosome. The protein is Large ribosomal subunit protein uL22c (rpl22) of Spirogyra maxima (Green alga).